Consider the following 313-residue polypeptide: Adhesin MafA 2/3 (313 aa).

The first 14 residues, 1–14 (MKTLLLLIPLVLTA), serve as a signal peptide directing secretion. The N-palmitoyl cysteine moiety is linked to residue C15. A lipid anchor (S-diacylglycerol cysteine) is attached at C15. Residues 282–298 (GDTTAQNRPDFKQNNGK) show a composition bias toward polar residues. The segment at 282 to 313 (GDTTAQNRPDFKQNNGKNPDVGNEVIRRRKGG) is disordered.

It belongs to the MafA family.

It is found in the cell outer membrane. The chain is Adhesin MafA 2/3 (mafA2) from Neisseria gonorrhoeae (strain ATCC 700825 / FA 1090).